Consider the following 449-residue polypeptide: Glucose-6-phosphate isomerase (449 aa).

T38 carries the phosphothreonine modification. The Proton donor role is filled by E290. Active-site residues include H311 and K425.

It belongs to the GPI family.

The protein resides in the cytoplasm. It carries out the reaction alpha-D-glucose 6-phosphate = beta-D-fructose 6-phosphate. It participates in carbohydrate biosynthesis; gluconeogenesis. The protein operates within carbohydrate degradation; glycolysis; D-glyceraldehyde 3-phosphate and glycerone phosphate from D-glucose: step 2/4. Its function is as follows. Catalyzes the reversible isomerization of glucose-6-phosphate to fructose-6-phosphate. The polypeptide is Glucose-6-phosphate isomerase (Geobacillus thermodenitrificans (strain NG80-2)).